We begin with the raw amino-acid sequence, 398 residues long: uncharacterized protein (398 aa).

This is an uncharacterized protein from Buchnera aphidicola subsp. Baizongia pistaciae (strain Bp).